The primary structure comprises 611 residues: POU domain, class 6, transcription factor 1 (611 aa).

The interval alanine 62–alanine 93 is disordered. In terms of domain architecture, POU-specific spans glutamate 449–glutamate 523. Residues lysine 544–serine 603 constitute a DNA-binding region (homeobox).

It belongs to the POU transcription factor family. Class-6 subfamily. In terms of tissue distribution, in the embryo, expressed exclusively in the developing brain, whereas in the adult its expression is restricted to brain, heart, skeletal muscle and lung. In the brain, the highest expression levels are found in specific cell layers of the cortex, the olfactory bulb, the hippocampus and the cerebellum.

The protein localises to the nucleus. Its function is as follows. Transcription factor that binds preferentially to a variant of the octamer motif (5'-ATGATAAT-3'). The chain is POU domain, class 6, transcription factor 1 (POU6F1) from Homo sapiens (Human).